Reading from the N-terminus, the 124-residue chain is uncharacterized protein (124 aa).

A helical transmembrane segment spans residues 13-33; the sequence is IIFMALYFVITGIVIRLIGYS.

The protein localises to the membrane. This is an uncharacterized protein from Bacillus anthracis.